Consider the following 509-residue polypeptide: ATP synthase subunit alpha (509 aa).

ATP is bound at residue 169–176 (GDRQTGKT).

Belongs to the ATPase alpha/beta chains family. As to quaternary structure, F-type ATPases have 2 components, CF(1) - the catalytic core - and CF(0) - the membrane proton channel. CF(1) has five subunits: alpha(3), beta(3), gamma(1), delta(1), epsilon(1). CF(0) has three main subunits: a(1), b(2) and c(9-12). The alpha and beta chains form an alternating ring which encloses part of the gamma chain. CF(1) is attached to CF(0) by a central stalk formed by the gamma and epsilon chains, while a peripheral stalk is formed by the delta and b chains.

Its subcellular location is the cell inner membrane. It catalyses the reaction ATP + H2O + 4 H(+)(in) = ADP + phosphate + 5 H(+)(out). Its function is as follows. Produces ATP from ADP in the presence of a proton gradient across the membrane. The alpha chain is a regulatory subunit. This Rhizobium etli (strain ATCC 51251 / DSM 11541 / JCM 21823 / NBRC 15573 / CFN 42) protein is ATP synthase subunit alpha.